Consider the following 360-residue polypeptide: Dihydroorotate dehydrogenase (quinone) (360 aa).

FMN is bound by residues 65 to 69 (AGLDK) and Thr-89. Position 69 (Lys-69) interacts with substrate. 114-118 (NRLGF) is a binding site for substrate. FMN contacts are provided by Asn-147 and Asn-180. Asn-180 contacts substrate. The Nucleophile role is filled by Ser-183. Substrate is bound at residue Asn-185. The FMN site is built by Lys-225 and Thr-253. 254–255 (NT) lines the substrate pocket. FMN-binding positions include Gly-276, Gly-305, and 326 to 327 (YT).

It belongs to the dihydroorotate dehydrogenase family. Type 2 subfamily. As to quaternary structure, monomer. It depends on FMN as a cofactor.

It is found in the cell membrane. It carries out the reaction (S)-dihydroorotate + a quinone = orotate + a quinol. It functions in the pathway pyrimidine metabolism; UMP biosynthesis via de novo pathway; orotate from (S)-dihydroorotate (quinone route): step 1/1. Its function is as follows. Catalyzes the conversion of dihydroorotate to orotate with quinone as electron acceptor. The polypeptide is Dihydroorotate dehydrogenase (quinone) (Verminephrobacter eiseniae (strain EF01-2)).